The following is a 364-amino-acid chain: Aminomethyltransferase (364 aa).

This sequence belongs to the GcvT family. In terms of assembly, the glycine cleavage system is composed of four proteins: P, T, L and H.

The catalysed reaction is N(6)-[(R)-S(8)-aminomethyldihydrolipoyl]-L-lysyl-[protein] + (6S)-5,6,7,8-tetrahydrofolate = N(6)-[(R)-dihydrolipoyl]-L-lysyl-[protein] + (6R)-5,10-methylene-5,6,7,8-tetrahydrofolate + NH4(+). Functionally, the glycine cleavage system catalyzes the degradation of glycine. This is Aminomethyltransferase from Salmonella paratyphi A (strain AKU_12601).